The chain runs to 535 residues: Arylsulfatase G (535 aa).

Residues 1-18 (MGWLFLKVLFLGVTFLGC) form the signal peptide. Aspartate 44, aspartate 45, and cysteine 84 together coordinate Ca(2+). The active-site Nucleophile is cysteine 84. The residue at position 84 (cysteine 84) is a 3-oxoalanine (Cys). N-linked (GlcNAc...) asparagine glycosylation occurs at asparagine 117. Lysine 137 is a binding site for substrate. Histidine 139 is an active-site residue. Position 162 (serine 162) interacts with substrate. Residue asparagine 215 is glycosylated (N-linked (GlcNAc...) asparagine). Histidine 251 serves as a coordination point for substrate. Aspartate 302 and asparagine 303 together coordinate Ca(2+). Asparagine 356 and asparagine 497 each carry an N-linked (GlcNAc...) asparagine glycan.

This sequence belongs to the sulfatase family. The cofactor is Ca(2+). In terms of processing, N-glycosylated with both high mannose and complex type sugars. Post-translationally, the conversion to 3-oxoalanine (also known as C-formylglycine, FGly), of a serine or cysteine residue in prokaryotes and of a cysteine residue in eukaryotes, is critical for catalytic activity. The 63-kDa precursor undergoes proteolytic processing in two steps, yielding two fragments in the first step (apparent molecular masses of 44 and 18 kDa). In the second step, the 44-kDa fragment is processed further to the 34- and 10-kDa chains. The 10-kDa chain is a cleavage product of the 44-kDa fragment but linked to the 18-kDa chain through a disulfide bridge.

The protein resides in the lysosome. It carries out the reaction an aryl sulfate + H2O = a phenol + sulfate + H(+). The catalysed reaction is Hydrolysis of the 3-sulfate groups of the N-sulfo-D-glucosamine 3-O-sulfate units of heparin.. Its function is as follows. Displays arylsulfatase activity with pseudosubstrates at acidic pH, such as p-nitrocatechol sulfate. Catalyzes the hydrolysis of the 3-sulfate groups of the N-sulfo-D-glucosamine 3-O-sulfate units of heparin. This chain is Arylsulfatase G (ARSG), found in Canis lupus familiaris (Dog).